The following is a 473-amino-acid chain: Photosystem II CP43 reaction center protein (473 aa).

Residues 1-14 (MKILYSLRRFYHVE) constitute a propeptide that is removed on maturation. The residue at position 15 (Thr15) is an N-acetylthreonine. Thr15 bears the Phosphothreonine mark. A run of 5 helical transmembrane segments spans residues 69 to 93 (LFEV…PHLA), 134 to 155 (LLGP…KDRN), 178 to 200 (KALY…RKIT), 255 to 275 (KPFA…LSYS), and 291 to 312 (WFNN…ASQA). A [CaMn4O5] cluster-binding site is contributed by Glu367. The chain crosses the membrane as a helical span at residues 447-471 (RARAAAAGFEKGIDRDLEPVLYMNP).

This sequence belongs to the PsbB/PsbC family. PsbC subfamily. PSII is composed of 1 copy each of membrane proteins PsbA, PsbB, PsbC, PsbD, PsbE, PsbF, PsbH, PsbI, PsbJ, PsbK, PsbL, PsbM, PsbT, PsbX, PsbY, PsbZ, Psb30/Ycf12, at least 3 peripheral proteins of the oxygen-evolving complex and a large number of cofactors. It forms dimeric complexes. It depends on Binds multiple chlorophylls and provides some of the ligands for the Ca-4Mn-5O cluster of the oxygen-evolving complex. It may also provide a ligand for a Cl- that is required for oxygen evolution. PSII binds additional chlorophylls, carotenoids and specific lipids. as a cofactor.

It localises to the plastid. The protein resides in the chloroplast thylakoid membrane. In terms of biological role, one of the components of the core complex of photosystem II (PSII). It binds chlorophyll and helps catalyze the primary light-induced photochemical processes of PSII. PSII is a light-driven water:plastoquinone oxidoreductase, using light energy to abstract electrons from H(2)O, generating O(2) and a proton gradient subsequently used for ATP formation. This chain is Photosystem II CP43 reaction center protein, found in Brachypodium distachyon (Purple false brome).